The following is a 170-amino-acid chain: Lipoprotein signal peptidase (170 aa).

3 consecutive transmembrane segments (helical) span residues 12 to 32 (WYWV…WVLA), 67 to 87 (WQRW…TVWL), and 93 to 113 (GLWR…GNLI). Catalysis depends on residues Asp-123 and Asp-141. Residues 133–153 (HFPAFNIADSAICVGAGLIIL) traverse the membrane as a helical segment.

Belongs to the peptidase A8 family.

It is found in the cell inner membrane. It carries out the reaction Release of signal peptides from bacterial membrane prolipoproteins. Hydrolyzes -Xaa-Yaa-Zaa-|-(S,diacylglyceryl)Cys-, in which Xaa is hydrophobic (preferably Leu), and Yaa (Ala or Ser) and Zaa (Gly or Ala) have small, neutral side chains.. It functions in the pathway protein modification; lipoprotein biosynthesis (signal peptide cleavage). Its function is as follows. This protein specifically catalyzes the removal of signal peptides from prolipoproteins. In Shewanella loihica (strain ATCC BAA-1088 / PV-4), this protein is Lipoprotein signal peptidase.